The chain runs to 208 residues: GTP cyclohydrolase-2 (208 aa).

49-53 lines the GTP pocket; that stretch reads RLHSE. The Zn(2+) site is built by cysteine 54, cysteine 65, and cysteine 67. GTP-binding positions include glutamine 70, 92–94, and threonine 114; that span reads EGR. Aspartate 126 serves as the catalytic Proton acceptor. Arginine 128 serves as the catalytic Nucleophile. Residues threonine 149 and lysine 154 each contribute to the GTP site.

This sequence belongs to the GTP cyclohydrolase II family. Zn(2+) serves as cofactor.

It carries out the reaction GTP + 4 H2O = 2,5-diamino-6-hydroxy-4-(5-phosphoribosylamino)-pyrimidine + formate + 2 phosphate + 3 H(+). Its pathway is cofactor biosynthesis; riboflavin biosynthesis; 5-amino-6-(D-ribitylamino)uracil from GTP: step 1/4. Catalyzes the conversion of GTP to 2,5-diamino-6-ribosylamino-4(3H)-pyrimidinone 5'-phosphate (DARP), formate and pyrophosphate. In Azotobacter vinelandii (strain DJ / ATCC BAA-1303), this protein is GTP cyclohydrolase-2.